The primary structure comprises 725 residues: Dipeptidyl-peptidase 5 (725 aa).

The signal sequence occupies residues 1-18 (MGALRWLSIAATASTALA). N-linked (GlcNAc...) asparagine glycans are attached at residues Asn-75, Asn-96, Asn-153, Asn-258, Asn-383, and Asn-453. Ser-563 functions as the Charge relay system in the catalytic mechanism. Residue Asn-610 is glycosylated (N-linked (GlcNAc...) asparagine). Active-site charge relay system residues include Asp-646 and His-678.

The protein belongs to the peptidase S9C family.

It is found in the secreted. The polypeptide is Dipeptidyl-peptidase 5 (Aspergillus oryzae (strain ATCC 42149 / RIB 40) (Yellow koji mold)).